Reading from the N-terminus, the 993-residue chain is Serine/threonine-protein phosphatase 6 regulatory ankyrin repeat subunit B (993 aa).

ANK repeat units lie at residues 7–36, 40–69, 73–102, 106–135, 139–168, 172–201, 205–234, 238–267, 271–301, 305–334, 338–367, 371–400, 404–433, 437–466, 470–498, 531–561, 566–595, 599–628, 633–662, 669–698, 702–731, 735–764, 771–800, 803–832, 838–867, 871–901, 905–934, and 941–970; these read TDQPPLVQAIFSGDPEEIRMLIHKTEDVNT, EKRTPLHVAAFLGDAEIIELLILSGARVNA, MWLTPLHRAVASRSEEAVQVLIKHSADVNA, NWQTPLHVAAANKAVKCAEVIIPLLSSVNV, GGRTALHHAALNGHVEMVNLLLAKGANINA, KDRRALHWAAYMGHLDVVALLINHGAEVTC, KGYTPLHAAASNGQINVVKHLLNLGVEIDE, YGNTALHIACYNGQDAVVNELIDYGANVNQ, NGFTPLHFAAASTHGALCLELLVNNGADVNI, DGKSPLHMTAVHGRFTRSQTLIQNGGEIDC, DGNTPLHVAARYGHELLINTLITSGADTAK, HSMFPLHLAALNAHSDCCRKLLSSGFEIDT, FGRTCLHAAAAGGNVECIKLLQSSGADFHK, CGRTPLHYAAANCHFHCIETLVTTGANVNE, WGRTALHYAAASDMDRNKTILGNAHDNSE, EGYNSIHYAAAYGHRQCLELLLERTNSGFEE, ATKSPLHLAAYNGHHQALEVLLQSLVDLDI, KGRTALDLAAFKGHTECVEALINQGASIFV, TKRTPLHASVINGHTLCLRLLLEIADNPEA, KGQTPLMLAVAYGHIDAVSLLLEKEANVDT, LGCTALHRGIMTGHEECVQMLLEQEVSILC, RGRTPLHYAAARGHATWLSELLQMALSEED, QGYTPLHWACYNGNENCIEVLLEQKCFRKF, NPFTPLHCAIINDHGNCASLLLGAIDSSIV, KGRTPLHAAAFADHVECLQLLLRHSAPVNA, SGKTALMMAAENGQAGAVDILVNSAQADLTV, DLNTPLHLACSKGHEKCALLILDKIQDESL, and ALQTPLHVAARNGLKVVVEELLAKGACVLA.

As to quaternary structure, protein phosphatase 6 (PP6) holoenzyme is proposed to be a heterotrimeric complex formed by the catalytic subunit, a SAPS domain-containing subunit (PP6R) and an ankyrin repeat-domain containing regulatory subunit (ARS). Interacts with PPP6R1.

Functionally, putative regulatory subunit of protein phosphatase 6 (PP6) that may be involved in the recognition of phosphoprotein substrates. This is Serine/threonine-protein phosphatase 6 regulatory ankyrin repeat subunit B (ANKRD44) from Homo sapiens (Human).